A 410-amino-acid chain; its full sequence is LL-diaminopimelate aminotransferase (410 aa).

Residues Tyr-15 and Gly-42 each contribute to the substrate site. Pyridoxal 5'-phosphate contacts are provided by residues Tyr-72, 108–109, Tyr-132, Asn-186, Tyr-217, and 245–247; these read TK and SFS. Substrate contacts are provided by Lys-109, Tyr-132, and Asn-186. Lys-248 is subject to N6-(pyridoxal phosphate)lysine. 2 residues coordinate pyridoxal 5'-phosphate: Arg-256 and Asn-291. Substrate is bound by residues Asn-291 and Arg-387.

The protein belongs to the class-I pyridoxal-phosphate-dependent aminotransferase family. LL-diaminopimelate aminotransferase subfamily. As to quaternary structure, homodimer. The cofactor is pyridoxal 5'-phosphate.

It carries out the reaction (2S,6S)-2,6-diaminopimelate + 2-oxoglutarate = (S)-2,3,4,5-tetrahydrodipicolinate + L-glutamate + H2O + H(+). It functions in the pathway amino-acid biosynthesis; L-lysine biosynthesis via DAP pathway; LL-2,6-diaminopimelate from (S)-tetrahydrodipicolinate (aminotransferase route): step 1/1. Functionally, involved in the synthesis of meso-diaminopimelate (m-DAP or DL-DAP), required for both lysine and peptidoglycan biosynthesis. Catalyzes the direct conversion of tetrahydrodipicolinate to LL-diaminopimelate. In Lawsonia intracellularis (strain PHE/MN1-00), this protein is LL-diaminopimelate aminotransferase.